The following is a 330-amino-acid chain: Neurogenic differentiation factor 4 (330 aa).

Residues 1 to 79 are disordered; that stretch reads MTKTYTKAKE…RGPKKKKMTK (79 aa). Residues 25 to 35 show a composition bias toward basic and acidic residues; sequence LSSKDELKAEN. Residues 52-64 are compositionally biased toward acidic residues; that stretch reads DSIEEEEEEEDDG. Residues 67–79 show a composition bias toward basic residues; that stretch reads PKRRGPKKKKMTK. Positions 73-79 match the Nuclear localization signal motif; that stretch reads KKKKMTK. A bHLH domain is found at 87–139; that stretch reads ARRVKANARERTRMHGLNDALDNLRRVMPCYSKTQKLSKIETLRLARNYIWAL. The leucine-zipper stretch occupies residues 162 to 183; sequence LSQPTSNLVAGCLQLGPQTLFL.

In terms of assembly, efficient DNA binding requires dimerization with another bHLH protein. Post-translationally, serine or threonine phosphorylation within the basic region may regulate neurogenic activity. In terms of tissue distribution, expressed in both the developing central nervous system and peripheral nervous system.

The protein resides in the nucleus. In terms of biological role, probably acts as a transcriptional activator. Mediates neuronal differentiation. Required for the regulation of amacrine cell fate specification in the retina. This chain is Neurogenic differentiation factor 4 (NEUROD4), found in Gallus gallus (Chicken).